The following is a 436-amino-acid chain: Fasciclin-like arabinogalactan protein 15 (436 aa).

A signal peptide spans Met-1–Ala-20. FAS1 domains follow at residues Asn-31–Leu-165 and Val-249–Leu-392. Residues Asn-68 and Asn-271 are each glycosylated (N-linked (GlcNAc...) asparagine).

It belongs to the fasciclin-like AGP family.

It localises to the secreted. Functionally, may be a cell surface adhesion protein. The protein is Fasciclin-like arabinogalactan protein 15 (FLA15) of Arabidopsis thaliana (Mouse-ear cress).